Consider the following 347-residue polypeptide: GMP reductase (347 aa).

Ala-108–Ala-131 is an NADP(+) binding site. Residues Gly-181 and Gly-183 each contribute to the K(+) site. Cys-186 serves as the catalytic Thioimidate intermediate. Residue Ile-216–Val-239 participates in NADP(+) binding.

The protein belongs to the IMPDH/GMPR family. GuaC type 1 subfamily. In terms of assembly, homotetramer.

The catalysed reaction is IMP + NH4(+) + NADP(+) = GMP + NADPH + 2 H(+). In terms of biological role, catalyzes the irreversible NADPH-dependent deamination of GMP to IMP. It functions in the conversion of nucleobase, nucleoside and nucleotide derivatives of G to A nucleotides, and in maintaining the intracellular balance of A and G nucleotides. This is GMP reductase from Vibrio campbellii (strain ATCC BAA-1116).